The sequence spans 287 residues: Inactive phospholipid phosphatase 7 (287 aa).

The segment at 1–75 (MPANQTRSRA…NNKDKKELPE (75 aa)) is disordered. At 1 to 120 (MPANQTRSRA…SSSWGSVRSM (120 aa)) the chain is on the cytoplasmic side. Residues 31-40 (SGGGGGGGES) are compositionally biased toward gly residues. The segment covering 49–65 (QRQQQNQQQQGDNPQPE) has biased composition (low complexity). The helical transmembrane segment at 121 to 141 (VKLLALTGHGIPWVFGTIVCL) threads the bilayer. The Extracellular portion of the chain corresponds to 142-146 (MRSNT). Residues 147-167 (LAGQEVLVNLLLALLLDVMTV) traverse the membrane as a helical segment. The Cytoplasmic segment spans residues 168–215 (SGMQKLVKRKGPWEMPPGFFDYLAMDIYSFPAAHASRAVMVSKFLLAH). Residues 216–236 (LVLAVPLRILLVLWAILVGIS) traverse the membrane as a helical segment. Topologically, residues 237 to 247 (RVLLGRHHLTD) are extracellular. Residues 248–268 (VGCGFALGFLHYSLVEMVWLS) form a helical membrane-spanning segment. Over 269–287 (SNTCQTLISIGTFNWSPLY) the chain is Cytoplasmic.

The protein belongs to the PA-phosphatase related phosphoesterase family.

It is found in the nucleus envelope. It localises to the endoplasmic reticulum membrane. Its subcellular location is the membrane. Plays a role as negative regulator of myoblast differentiation, in part through effects on MTOR signaling. Has no detectable enzymatic activity. This Danio rerio (Zebrafish) protein is Inactive phospholipid phosphatase 7.